The following is a 358-amino-acid chain: 3-dehydroquinate synthase (358 aa).

NAD(+)-binding positions include 69-74, 103-107, 127-128, Lys140, Lys149, and 167-170; these read DGEQYK, GVIGD, TT, and TLNT. Zn(2+) is bound by residues Glu182, His245, and His262.

The protein belongs to the sugar phosphate cyclases superfamily. Dehydroquinate synthase family. Co(2+) is required as a cofactor. It depends on Zn(2+) as a cofactor. Requires NAD(+) as cofactor.

The protein localises to the cytoplasm. The enzyme catalyses 7-phospho-2-dehydro-3-deoxy-D-arabino-heptonate = 3-dehydroquinate + phosphate. Its pathway is metabolic intermediate biosynthesis; chorismate biosynthesis; chorismate from D-erythrose 4-phosphate and phosphoenolpyruvate: step 2/7. Catalyzes the conversion of 3-deoxy-D-arabino-heptulosonate 7-phosphate (DAHP) to dehydroquinate (DHQ). This chain is 3-dehydroquinate synthase, found in Hydrogenovibrio crunogenus (strain DSM 25203 / XCL-2) (Thiomicrospira crunogena).